We begin with the raw amino-acid sequence, 268 residues long: MNALEEILDGVRADLAVRERETSLAALKQRVERVPDPRDALAVLRAPRVSVIAEIKRRSPSRGALATIADPAALASLYEQAGAAAVSVLTEQRRFGGSLADLDAVRVAVDIPVLRKDFVISPYQVLEARAHGADMVLLIVAALDQPRLIGLLERVESLGMTALVEVHDETEMLRALDAGARLVGVNARNLRTLEVDRETFARLAPMVPQGVLKVAESGVRGPRDLLQYAGAGADAVLVGEAAVTGGDPRQFVADLVTAGTHPATRIAH.

This sequence belongs to the TrpC family.

It carries out the reaction 1-(2-carboxyphenylamino)-1-deoxy-D-ribulose 5-phosphate + H(+) = (1S,2R)-1-C-(indol-3-yl)glycerol 3-phosphate + CO2 + H2O. Its pathway is amino-acid biosynthesis; L-tryptophan biosynthesis; L-tryptophan from chorismate: step 4/5. This chain is Indole-3-glycerol phosphate synthase, found in Parafrankia sp. (strain EAN1pec).